The sequence spans 361 residues: UDP-N-acetylglucosamine--N-acetylmuramyl-(pentapeptide) pyrophosphoryl-undecaprenol N-acetylglucosamine transferase (361 aa).

Serine 199 and glutamine 290 together coordinate UDP-N-acetyl-alpha-D-glucosamine.

The protein belongs to the glycosyltransferase 28 family. MurG subfamily.

It is found in the cell membrane. The enzyme catalyses Mur2Ac(oyl-L-Ala-gamma-D-Glu-L-Lys-D-Ala-D-Ala)-di-trans,octa-cis-undecaprenyl diphosphate + UDP-N-acetyl-alpha-D-glucosamine = beta-D-GlcNAc-(1-&gt;4)-Mur2Ac(oyl-L-Ala-gamma-D-Glu-L-Lys-D-Ala-D-Ala)-di-trans,octa-cis-undecaprenyl diphosphate + UDP + H(+). It participates in cell wall biogenesis; peptidoglycan biosynthesis. In terms of biological role, cell wall formation. Catalyzes the transfer of a GlcNAc subunit on undecaprenyl-pyrophosphoryl-MurNAc-pentapeptide (lipid intermediate I) to form undecaprenyl-pyrophosphoryl-MurNAc-(pentapeptide)GlcNAc (lipid intermediate II). This Streptococcus mutans serotype c (strain ATCC 700610 / UA159) protein is UDP-N-acetylglucosamine--N-acetylmuramyl-(pentapeptide) pyrophosphoryl-undecaprenol N-acetylglucosamine transferase.